The sequence spans 951 residues: Bifunctional glutamine synthetase adenylyltransferase/adenylyl-removing enzyme (951 aa).

Residues 1–440 (MLPLPSELQI…VFDDLIGDET (440 aa)) are adenylyl removase. The segment at 449 to 951 (HGLYKSLWQD…WLAANDANVS (503 aa)) is adenylyl transferase.

It belongs to the GlnE family. Requires Mg(2+) as cofactor.

The enzyme catalyses [glutamine synthetase]-O(4)-(5'-adenylyl)-L-tyrosine + phosphate = [glutamine synthetase]-L-tyrosine + ADP. The catalysed reaction is [glutamine synthetase]-L-tyrosine + ATP = [glutamine synthetase]-O(4)-(5'-adenylyl)-L-tyrosine + diphosphate. Functionally, involved in the regulation of glutamine synthetase GlnA, a key enzyme in the process to assimilate ammonia. When cellular nitrogen levels are high, the C-terminal adenylyl transferase (AT) inactivates GlnA by covalent transfer of an adenylyl group from ATP to specific tyrosine residue of GlnA, thus reducing its activity. Conversely, when nitrogen levels are low, the N-terminal adenylyl removase (AR) activates GlnA by removing the adenylyl group by phosphorolysis, increasing its activity. The regulatory region of GlnE binds the signal transduction protein PII (GlnB) which indicates the nitrogen status of the cell. This chain is Bifunctional glutamine synthetase adenylyltransferase/adenylyl-removing enzyme, found in Yersinia pestis bv. Antiqua (strain Antiqua).